The primary structure comprises 403 residues: TBC1 domain family member 20 (403 aa).

A disordered region spans residues methionine 1 to arginine 29. Basic and acidic residues predominate over residues glycine 18 to alanine 27. Residues leucine 60–histidine 246 enclose the Rab-GAP TBC domain. 2 consecutive transmembrane segments (helical) span residues leucine 238–valine 258 and phenylalanine 367–valine 387.

Its subcellular location is the membrane. Its function is as follows. GTPase-activating protein (GAP) specific for Rab1 and Rab2 small GTPase families for which it can accelerate the intrinsic GTP hydrolysis rate by more than five orders of magnitude. Also shows GAP activity for RAB18 GTPase. Promotes RAB18 dissociation from the endoplasmic reticulum (ER) membrane into the cytosol, probably through stimulating RAB18 GTP-hydrolysis. Involved in maintaining endoplasmic reticulum structure. The sequence is that of TBC1 domain family member 20 (TBC1D20) from Bos taurus (Bovine).